A 241-amino-acid chain; its full sequence is Endothelial protein C receptor (241 aa).

The first 17 residues, 1-17, serve as a signal peptide directing secretion; sequence MLTTLLPLLPLLLPGWA. The Extracellular portion of the chain corresponds to 18–212; sequence LCSQEASDGP…GSQTGRSYTS (195 aa). Residues asparagine 49, asparagine 66, asparagine 138, and asparagine 174 are each glycosylated (N-linked (GlcNAc...) asparagine). 2 cysteine pairs are disulfide-bonded: cysteine 120–cysteine 188 and cysteine 221–cysteine 234. Residues 213–233 traverse the membrane as a helical segment; that stretch reads LVLGVLVGCFIVTGVAVGIFL. The Cytoplasmic segment spans residues 234-241; sequence CTGGRRRC.

As to expression, expressed in endothelial cells.

The protein resides in the membrane. Its function is as follows. Binds activated protein C. Enhances protein C activation by the thrombin-thrombomodulin complex; plays a role in the protein C pathway controlling blood coagulation. The protein is Endothelial protein C receptor (PROCR) of Bos taurus (Bovine).